An 80-amino-acid polypeptide reads, in one-letter code: Omega-conotoxin-like PuIA (80 aa).

Positions 1–22 are cleaved as a signal peptide; the sequence is MKLTCVMIVAVLFLTAWTFVTA. Positions 23–50 are excised as a propeptide; it reads DSIRALEDLFAKAPDEMENSGASPLNER. Intrachain disulfides connect cysteine 52–cysteine 70, cysteine 59–cysteine 74, and cysteine 69–cysteine 78.

It belongs to the conotoxin O1 superfamily. Expressed by the venom duct.

The protein resides in the secreted. Functionally, omega-conotoxins act at presynaptic membranes, they bind and block voltage-gated calcium channels (Cav). The polypeptide is Omega-conotoxin-like PuIA (Conus pulicarius (Flea-bitten cone)).